We begin with the raw amino-acid sequence, 227 residues long: Putative methylase YubD (227 aa).

This sequence belongs to the N(4)/N(6)-methyltransferase family.

Its function is as follows. A putative beta subtype methylase whose recognition site is unknown. In Escherichia coli (strain K12), this protein is Putative methylase YubD (yubD).